Here is a 501-residue protein sequence, read N- to C-terminus: Dipeptide and tripeptide permease A (501 aa).

At 1-21 (MSTANKKPTESVSLNAFKQPK) the chain is on the cytoplasmic side. A helical membrane pass occupies residues 22–44 (AFYLIFSIELWERFGYYGLQGIM). Over 45–59 (AVYLVKQLGMSEADS) the chain is Periplasmic. Residues 60–80 (ITLFSSFSALVYGLVAIGGWL) traverse the membrane as a helical segment. The Cytoplasmic portion of the chain corresponds to 81-89 (GDKILGTKR). The chain crosses the membrane as a helical span at residues 90–110 (VIMLGAVVLAIGYALVAWSGH). A topological domain (periplasmic) is located at residue Asp-111. Residues 112–132 (AGIVYMGMAAIAVGNGLFKAN) form a helical membrane-spanning segment. The Cytoplasmic segment spans residues 133–153 (PSSLLSTCYAKDDPRLDGAFT). The helical transmembrane segment at 154 to 174 (MYYMSVNIGSFFSMLATPWLA) threads the bilayer. The Periplasmic segment spans residues 175-178 (ARYG). Residues 179–199 (WSTAFALSVVGMLITVVNFAF) traverse the membrane as a helical segment. Residues 200-219 (CQRWVKSYGSKPDFEPINFR) lie on the Cytoplasmic side of the membrane. The chain crosses the membrane as a helical span at residues 220 to 240 (NLLLTIVGIVVLIAVATWLLH). Topologically, residues 241 to 246 (NQDIAR) are periplasmic. A helical membrane pass occupies residues 247 to 267 (MVLGVIALGIVIIFGKEAFSM). Topologically, residues 268 to 274 (HGAARRK) are cytoplasmic. A helical membrane pass occupies residues 275–295 (MIVAFILMLQAIIFFVLYSQM). At 296–320 (PTSLNFFAIRNVEHSILGIAFEPEQ) the chain is on the periplasmic side. Residues 321 to 341 (YQALNPFWIITGSPILAAIYN) form a helical membrane-spanning segment. The Cytoplasmic portion of the chain corresponds to 342–352 (RMGDTLPMPMK). A helical membrane pass occupies residues 353–373 (FAIGMVLCSGAFLILPLGAKF). Topologically, residues 374–383 (ANDAGIVSVN) are periplasmic. The chain crosses the membrane as a helical span at residues 384-404 (WLIASYGLQSIGELMISGLGL). Residues 405–414 (AMVAQLVPQR) lie on the Cytoplasmic side of the membrane. The helical transmembrane segment at 415–435 (LMGFIMGSWFLTTAGANIIGG) threads the bilayer. Topologically, residues 436–459 (YVANLMAVPSDVTDPLMSLEVYGR) are periplasmic. Residues 460–480 (VFMQIGIATAVIAVLMLLTAP) traverse the membrane as a helical segment. At 481-501 (KLNRMTQDDDTAEKGSKAATV) the chain is on the cytoplasmic side.

This sequence belongs to the major facilitator superfamily. Proton-dependent oligopeptide transporter (POT/PTR) (TC 2.A.17) family. DtpA subfamily.

It is found in the cell inner membrane. Its function is as follows. Proton-dependent permease that transports di- and tripeptides. This Salmonella typhi protein is Dipeptide and tripeptide permease A.